Here is a 1285-residue protein sequence, read N- to C-terminus: Dermonecrotic toxin (1285 aa).

The helical transmembrane segment at 402–422 threads the bilayer; that stretch reads MLVPAVGIPINFALSATALGL.

It localises to the cytoplasm. It is found in the secreted. Its subcellular location is the host membrane. This is a dermonecrotic toxin. This osteolytic toxin, induces bone resorption. Potent mitogen. This toxin is associated with the severe progressive form of the atrophic rhinitis, a major respiratory disease in pigs. This chain is Dermonecrotic toxin (toxA), found in Pasteurella multocida.